Reading from the N-terminus, the 215-residue chain is Large ribosomal subunit protein bL25 (215 aa).

Positions 1–10 (MAKSASNQLR) are enriched in polar residues. 2 disordered regions span residues 1 to 25 (MAKS…SRRA) and 187 to 215 (ELEG…GESE).

It belongs to the bacterial ribosomal protein bL25 family. CTC subfamily. As to quaternary structure, part of the 50S ribosomal subunit; part of the 5S rRNA/L5/L18/L25 subcomplex. Contacts the 5S rRNA. Binds to the 5S rRNA independently of L5 and L18.

Its function is as follows. This is one of the proteins that binds to the 5S RNA in the ribosome where it forms part of the central protuberance. In Mycobacterium bovis (strain ATCC BAA-935 / AF2122/97), this protein is Large ribosomal subunit protein bL25.